A 312-amino-acid polypeptide reads, in one-letter code: Malate dehydrogenase (312 aa).

NAD(+)-binding positions include 12–17 (GAGFTG) and Asp-36. 2 residues coordinate substrate: Arg-87 and Arg-93. Residues Asn-100 and 123 to 125 (LTN) each bind NAD(+). Residue Asn-125 coordinates substrate. Ser-149 carries the post-translational modification Phosphoserine. Arg-156 serves as a coordination point for substrate. His-180 (proton acceptor) is an active-site residue.

This sequence belongs to the LDH/MDH superfamily. MDH type 3 family.

It carries out the reaction (S)-malate + NAD(+) = oxaloacetate + NADH + H(+). Its function is as follows. Catalyzes the reversible oxidation of malate to oxaloacetate. The protein is Malate dehydrogenase of Bacillus pumilus (strain SAFR-032).